The chain runs to 616 residues: MATIQSETDCYDIIEVLGKGTFGEVAKGWRRSTGEMVAIKILKNDAYRSRIIKNELKLLRCVRGLDPDEAHVIRFLEFFHDALKFYLVFELLEQNLFEFQKENNFAPLPARHIRTVTLQVLRALARLKELAIIHADLKPENIMLVDQTRCPFRVKVIDFGSASIFSEVRYVKEPYIQSRFYRAPEILLGLPFCEKVDVWSLGCVMAELHLGWPLYPGNNEYDQVRYICETQGLPKPHLLHAARKAHHFFKRNPHPDATNPWQLKSSADYLAETKVRPLERRKYMLKSLDQIETVNGGGAVNRLSFPDREALAEHADLKSMVELIKRMLTWESHERISPSAALRHPFVSMQQLRSAHEATRYYQLSLRGCRLSLQVDGKPPPPVIANAEDGPPYYRLAEEEETAGLGGVTGSGSFFREDKAPGMQRAIDQLDDLSLQEARRGLWSDTRADMVSDMLAPLKVATTSHRVPDSGPEPILAFYGSRLTGRHKARKAPAGSKSDSNFSNLIRLSQASPEDAGSCRGSGWEEGEGHTTSTEPSAIPQREGDGPSIKDRPMDAERSGPELFDPSGCPGEWLNEPEWTLEGIRGSRAQGLPARHPHPHGPPRTTSFLQHVGGHH.

The Protein kinase domain occupies 11–347; it reads YDIIEVLGKG…PSAALRHPFV (337 aa). Residues 17 to 25 and lysine 40 contribute to the ATP site; that span reads LGKGTFGEV. The active-site Proton acceptor is the aspartate 136. A disordered region spans residues 487-616; that stretch reads HKARKAPAGS…SFLQHVGGHH (130 aa). The segment covering 497-512 has biased composition (polar residues); sequence KSDSNFSNLIRLSQAS. A Phosphoserine modification is found at serine 512. A compositionally biased stretch (basic and acidic residues) spans 542–560; sequence REGDGPSIKDRPMDAERSG.

It belongs to the protein kinase superfamily. CMGC Ser/Thr protein kinase family. HIPK subfamily. Post-translationally, autophosphorylated.

It is found in the cytoplasm. It catalyses the reaction L-seryl-[protein] + ATP = O-phospho-L-seryl-[protein] + ADP + H(+). The enzyme catalyses L-threonyl-[protein] + ATP = O-phospho-L-threonyl-[protein] + ADP + H(+). Functionally, protein kinase that phosphorylates TP53, and thus induces TP53 repression of BIRC5 promoter. May act as a corepressor of transcription factors (Potential). The sequence is that of Homeodomain-interacting protein kinase 4 (Hipk4) from Rattus norvegicus (Rat).